Reading from the N-terminus, the 124-residue chain is Small ribosomal subunit protein uS12 (124 aa).

The residue at position 89 (aspartate 89) is a 3-methylthioaspartic acid.

The protein belongs to the universal ribosomal protein uS12 family. As to quaternary structure, part of the 30S ribosomal subunit. Contacts proteins S8 and S17. May interact with IF1 in the 30S initiation complex.

With S4 and S5 plays an important role in translational accuracy. Functionally, interacts with and stabilizes bases of the 16S rRNA that are involved in tRNA selection in the A site and with the mRNA backbone. Located at the interface of the 30S and 50S subunits, it traverses the body of the 30S subunit contacting proteins on the other side and probably holding the rRNA structure together. The combined cluster of proteins S8, S12 and S17 appears to hold together the shoulder and platform of the 30S subunit. In Caldanaerobacter subterraneus subsp. tengcongensis (strain DSM 15242 / JCM 11007 / NBRC 100824 / MB4) (Thermoanaerobacter tengcongensis), this protein is Small ribosomal subunit protein uS12.